We begin with the raw amino-acid sequence, 368 residues long: Methylthioribose-1-phosphate isomerase (368 aa).

Residues 54–56, R91, and Q204 contribute to the substrate site; that span reads RGA. Catalysis depends on D245, which acts as the Proton donor. Residue 255–256 coordinates substrate; it reads NK.

Belongs to the eIF-2B alpha/beta/delta subunits family. MtnA subfamily.

The enzyme catalyses 5-(methylsulfanyl)-alpha-D-ribose 1-phosphate = 5-(methylsulfanyl)-D-ribulose 1-phosphate. It functions in the pathway amino-acid biosynthesis; L-methionine biosynthesis via salvage pathway; L-methionine from S-methyl-5-thio-alpha-D-ribose 1-phosphate: step 1/6. Its function is as follows. Catalyzes the interconversion of methylthioribose-1-phosphate (MTR-1-P) into methylthioribulose-1-phosphate (MTRu-1-P). The polypeptide is Methylthioribose-1-phosphate isomerase (Gluconobacter oxydans (strain 621H) (Gluconobacter suboxydans)).